The sequence spans 111 residues: uncharacterized protein (111 aa).

The next 2 helical transmembrane spans lie at 45–65 (AFLI…LLVI) and 91–111 (LPAG…ILHI).

It is found in the cell membrane. This is an uncharacterized protein from Methanothermobacter thermautotrophicus (strain ATCC 29096 / DSM 1053 / JCM 10044 / NBRC 100330 / Delta H) (Methanobacterium thermoautotrophicum).